Consider the following 107-residue polypeptide: Iron-binding protein IscA (107 aa).

Residues cysteine 35, cysteine 99, and cysteine 101 each contribute to the Fe cation site.

It belongs to the HesB/IscA family. Homodimer; may form tetramers and higher multimers. Fe cation is required as a cofactor.

Its function is as follows. Is able to transfer iron-sulfur clusters to apo-ferredoxin. Multiple cycles of [2Fe2S] cluster formation and transfer are observed, suggesting that IscA acts catalytically. Recruits intracellular free iron so as to provide iron for the assembly of transient iron-sulfur cluster in IscU in the presence of IscS, L-cysteine and the thioredoxin reductase system TrxA/TrxB. This Klebsiella pneumoniae subsp. pneumoniae (strain ATCC 700721 / MGH 78578) protein is Iron-binding protein IscA.